A 510-amino-acid chain; its full sequence is Pectinesterase 2 (510 aa).

Positions 1–19 (MALRILITVSLVLFSLSHT) are cleaved as a signal peptide. Residues Asn110 and Asn158 are each glycosylated (N-linked (GlcNAc...) asparagine). Positions 275 and 305 each coordinate substrate. The Proton donor role is filled by Asp328. Cys342 and Cys362 are oxidised to a cystine. Asp349 serves as the catalytic Nucleophile. 2 N-linked (GlcNAc...) asparagine glycosylation sites follow: Asn371 and Asn385. Positions 416 and 418 each coordinate substrate.

In the N-terminal section; belongs to the PMEI family. The protein in the C-terminal section; belongs to the pectinesterase family. In terms of tissue distribution, expressed at low levels in young leaves, young bark, young fruit, mature fruit vesicles, shoots and flower buds, young bark and juice vesicles. In both leaf and fruit abscission zones, and mature leaves, expression was initially undetectable but increased markedly following ethylene treatment.

Its subcellular location is the secreted. It is found in the cell wall. The enzyme catalyses [(1-&gt;4)-alpha-D-galacturonosyl methyl ester](n) + n H2O = [(1-&gt;4)-alpha-D-galacturonosyl](n) + n methanol + n H(+). It participates in glycan metabolism; pectin degradation; 2-dehydro-3-deoxy-D-gluconate from pectin: step 1/5. Acts in the modification of cell walls via demethylesterification of cell wall pectin. This Citrus sinensis (Sweet orange) protein is Pectinesterase 2 (PECS-2.1).